The sequence spans 482 residues: UDP-N-acetylmuramate--L-alanine ligase (482 aa).

119-125 (GTHGKTT) lines the ATP pocket.

It belongs to the MurCDEF family.

Its subcellular location is the cytoplasm. It carries out the reaction UDP-N-acetyl-alpha-D-muramate + L-alanine + ATP = UDP-N-acetyl-alpha-D-muramoyl-L-alanine + ADP + phosphate + H(+). It participates in cell wall biogenesis; peptidoglycan biosynthesis. In terms of biological role, cell wall formation. The protein is UDP-N-acetylmuramate--L-alanine ligase of Cyanothece sp. (strain PCC 7425 / ATCC 29141).